We begin with the raw amino-acid sequence, 445 residues long: Histidinol dehydrogenase (445 aa).

NAD(+)-binding residues include Tyr-138, Gln-199, and Asn-222. Substrate contacts are provided by Ser-245, Gln-267, and His-270. 2 residues coordinate Zn(2+): Gln-267 and His-270. Residues Glu-335 and His-336 each act as proton acceptor in the active site. The substrate site is built by His-336, Asp-369, Glu-423, and His-428. Asp-369 is a binding site for Zn(2+). A Zn(2+)-binding site is contributed by His-428.

The protein belongs to the histidinol dehydrogenase family. Requires Zn(2+) as cofactor.

The enzyme catalyses L-histidinol + 2 NAD(+) + H2O = L-histidine + 2 NADH + 3 H(+). Its pathway is amino-acid biosynthesis; L-histidine biosynthesis; L-histidine from 5-phospho-alpha-D-ribose 1-diphosphate: step 9/9. Its function is as follows. Catalyzes the sequential NAD-dependent oxidations of L-histidinol to L-histidinaldehyde and then to L-histidine. This is Histidinol dehydrogenase from Burkholderia pseudomallei (strain 1710b).